Here is a 506-residue protein sequence, read N- to C-terminus: Cytochrome P450 6a2 (506 aa).

Heme is bound at residue cysteine 451.

This sequence belongs to the cytochrome P450 family. Requires heme as cofactor.

The protein localises to the endoplasmic reticulum membrane. Its subcellular location is the microsome membrane. In terms of biological role, is involved in the breakdown of synthetic insecticides and may be involved in the metabolism of insect hormones. This Drosophila melanogaster (Fruit fly) protein is Cytochrome P450 6a2 (Cyp6a2).